A 627-amino-acid polypeptide reads, in one-letter code: Serine/threonine-protein phosphatase 2A 56 kDa regulatory subunit delta 2 isoform (627 aa).

Positions 1–37 (MKGLRSKFVKALSLKDEQGSHKNGHSKSHYISKNGSY) are disordered.

The protein belongs to the phosphatase 2A regulatory subunit B family. In terms of assembly, PP2A consists of a common heterodimeric core enzyme, composed of a 36 kDa catalytic subunit (subunit C) and a 65 kDa constant regulatory subunit (PR65 or subunit A), that associates with a variety of regulatory subunits. Proteins that associate with the core dimer include three families of regulatory subunits B (the R2/B/PR55/B55, R3/B''/PR72/PR130/PR59 and R5/B'/B56 families), the 48 kDa variable regulatory subunit, viral proteins, and cell signaling molecules.

It is found in the cytoplasm. It localises to the cell tip. Its function is as follows. The B regulatory subunit might modulate substrate selectivity and catalytic activity, and might also direct the localization of the catalytic enzyme to a particular subcellular compartment. Has a role in cell shape control and septum formation. The protein is Serine/threonine-protein phosphatase 2A 56 kDa regulatory subunit delta 2 isoform (par2) of Schizosaccharomyces pombe (strain 972 / ATCC 24843) (Fission yeast).